A 420-amino-acid polypeptide reads, in one-letter code: Hemocyanin 2-c chain (420 aa).

Positions 1–12 are enriched in basic residues; sequence DFGHSKKIRKNV. The disordered stretch occupies residues 1-20; the sequence is DFGHSKKIRKNVHSLTAEEQ. Residue His-46 participates in Cu cation binding. The cysteines at positions 52 and 63 are disulfide-linked. 5 residues coordinate Cu cation: His-66, His-73, His-185, His-189, and His-216. Cystine bridges form between Cys-175/Cys-242 and Cys-335/Cys-342.

Post-translationally, O-glycosylated. In terms of tissue distribution, hemolymph.

It is found in the secreted. The protein localises to the extracellular space. In terms of biological role, hemocyanins are copper-containing oxygen carriers occurring freely dissolved in the hemolymph of many mollusks and arthropods. This is Hemocyanin 2-c chain from Megathura crenulata (Giant keyhole limpet).